Consider the following 591-residue polypeptide: Formate--tetrahydrofolate ligase (591 aa).

74–81 (TPLGEGKS) lines the ATP pocket.

The protein belongs to the formate--tetrahydrofolate ligase family.

It catalyses the reaction (6S)-5,6,7,8-tetrahydrofolate + formate + ATP = (6R)-10-formyltetrahydrofolate + ADP + phosphate. It functions in the pathway one-carbon metabolism; tetrahydrofolate interconversion. This is Formate--tetrahydrofolate ligase from Lawsonia intracellularis (strain PHE/MN1-00).